We begin with the raw amino-acid sequence, 206 residues long: Large ribosomal subunit protein uL4 (206 aa).

The interval 43–94 (ARSGNRAQKDREQVKHTTKKPWRQKGTGRARAGMSSSPLWRGGGRIFPNSPE) is disordered. Positions 58 to 70 (HTTKKPWRQKGTG) are enriched in basic residues.

This sequence belongs to the universal ribosomal protein uL4 family. As to quaternary structure, part of the 50S ribosomal subunit.

One of the primary rRNA binding proteins, this protein initially binds near the 5'-end of the 23S rRNA. It is important during the early stages of 50S assembly. It makes multiple contacts with different domains of the 23S rRNA in the assembled 50S subunit and ribosome. In terms of biological role, forms part of the polypeptide exit tunnel. This Polynucleobacter asymbioticus (strain DSM 18221 / CIP 109841 / QLW-P1DMWA-1) (Polynucleobacter necessarius subsp. asymbioticus) protein is Large ribosomal subunit protein uL4.